Reading from the N-terminus, the 341-residue chain is MAVVEEQVVLRILDANLDRAREGVRVVEEWLRFGGGPGESLAECKALRQQLGRFHTERLRAARDTPHDPGTGLEHPDEGVRSSPLDVVRVNFARIQEALRVLEEYAKLVQPDLAAAAKEWRYRVYTLESTATGGDLRTRLAAARLYLVTSPHPELIEIVEHALAVGLPLVQLREKEAPARAVLDIALRLRDVTLRHGALFIVNDRVDLALACGADGVHLGQEDLPLARARALMGPRLLIGQSTHAPAEAQQAVADGADYLGVGPVYATPTKQGRTPVGLEYVRHCRESIERPGFAIGGIDRSNLEAVIAAGAERIAVVRAIMAAEDPGRTTAWFLERLNRG.

Residues 1–123 (MAVVEEQVVL…AAAAKEWRYR (123 aa)) form a unknown region. The segment at 61–80 (AARDTPHDPGTGLEHPDEGV) is disordered. Residues 124–341 (VYTLESTATG…AWFLERLNRG (218 aa)) are thiamine-phosphate synthase. Residues 171 to 175 (QLREK) and asparagine 203 contribute to the 4-amino-2-methyl-5-(diphosphooxymethyl)pyrimidine site. Mg(2+) contacts are provided by aspartate 204 and aspartate 223. Serine 242 provides a ligand contact to 4-amino-2-methyl-5-(diphosphooxymethyl)pyrimidine. Residue 268–270 (TPT) participates in 2-[(2R,5Z)-2-carboxy-4-methylthiazol-5(2H)-ylidene]ethyl phosphate binding. Lysine 271 contacts 4-amino-2-methyl-5-(diphosphooxymethyl)pyrimidine. Glycine 298 provides a ligand contact to 2-[(2R,5Z)-2-carboxy-4-methylthiazol-5(2H)-ylidene]ethyl phosphate.

Belongs to the thiamine-phosphate synthase family. Mg(2+) serves as cofactor.

It carries out the reaction 2-[(2R,5Z)-2-carboxy-4-methylthiazol-5(2H)-ylidene]ethyl phosphate + 4-amino-2-methyl-5-(diphosphooxymethyl)pyrimidine + 2 H(+) = thiamine phosphate + CO2 + diphosphate. The enzyme catalyses 2-(2-carboxy-4-methylthiazol-5-yl)ethyl phosphate + 4-amino-2-methyl-5-(diphosphooxymethyl)pyrimidine + 2 H(+) = thiamine phosphate + CO2 + diphosphate. It catalyses the reaction 4-methyl-5-(2-phosphooxyethyl)-thiazole + 4-amino-2-methyl-5-(diphosphooxymethyl)pyrimidine + H(+) = thiamine phosphate + diphosphate. It functions in the pathway cofactor biosynthesis; thiamine diphosphate biosynthesis; thiamine phosphate from 4-amino-2-methyl-5-diphosphomethylpyrimidine and 4-methyl-5-(2-phosphoethyl)-thiazole: step 1/1. In terms of biological role, condenses 4-methyl-5-(beta-hydroxyethyl)thiazole monophosphate (THZ-P) and 2-methyl-4-amino-5-hydroxymethyl pyrimidine pyrophosphate (HMP-PP) to form thiamine monophosphate (TMP). The sequence is that of Thiamine-phosphate synthase from Gloeobacter violaceus (strain ATCC 29082 / PCC 7421).